Consider the following 163-residue polypeptide: Outer membrane protein assembly factor BamE (163 aa).

Positions 1–22 (MINKKQSLTLLSAIALSVSLSA) are cleaved as a signal peptide. The N-palmitoyl cysteine moiety is linked to residue cysteine 23. Cysteine 23 carries S-diacylglycerol cysteine lipidation. A disordered region spans residues 122–163 (EQSKLPMVNTTESAPQVPAQRPDEKPLVKENQTEAQVQKPIK). The span at 142–153 (RPDEKPLVKENQ) shows a compositional bias: basic and acidic residues.

This sequence belongs to the BamE family. In terms of assembly, part of the Bam complex.

Its subcellular location is the cell outer membrane. Part of the outer membrane protein assembly complex, which is involved in assembly and insertion of beta-barrel proteins into the outer membrane. This is Outer membrane protein assembly factor BamE from Shewanella oneidensis (strain ATCC 700550 / JCM 31522 / CIP 106686 / LMG 19005 / NCIMB 14063 / MR-1).